The primary structure comprises 136 residues: Large ribosomal subunit protein uL16c (136 aa).

It belongs to the universal ribosomal protein uL16 family. As to quaternary structure, part of the 50S ribosomal subunit.

The protein resides in the plastid. It is found in the chloroplast. The protein is Large ribosomal subunit protein uL16c of Chlamydomonas reinhardtii (Chlamydomonas smithii).